A 507-amino-acid chain; its full sequence is Archaeal-type glutamate synthase [NADPH] (507 aa).

4Fe-4S ferredoxin-type domains lie at 10 to 39 (FVVERDDYKCIRCLACVRVCSYGANFYDEN) and 41 to 70 (NRVYTENTKCVGCHFCEAICPTEAITVRKN). Residues Cys19, Cys22, Cys25, Cys29, Cys50, Cys53, Cys56, and Cys60 each coordinate [4Fe-4S] cluster.

It belongs to the glutamate synthase family. It depends on FMN as a cofactor.

It catalyses the reaction 2 L-glutamate + NADP(+) = L-glutamine + 2-oxoglutarate + NADPH + H(+). This Thermotoga maritima (strain ATCC 43589 / DSM 3109 / JCM 10099 / NBRC 100826 / MSB8) protein is Archaeal-type glutamate synthase [NADPH].